Reading from the N-terminus, the 450-residue chain is Asparagine--tRNA ligase (450 aa).

The protein belongs to the class-II aminoacyl-tRNA synthetase family. As to quaternary structure, homodimer.

It localises to the cytoplasm. It catalyses the reaction tRNA(Asn) + L-asparagine + ATP = L-asparaginyl-tRNA(Asn) + AMP + diphosphate + H(+). The polypeptide is Asparagine--tRNA ligase (Metamycoplasma arthritidis (strain 158L3-1) (Mycoplasma arthritidis)).